We begin with the raw amino-acid sequence, 244 residues long: Putative membrane peptidase YdiL (244 aa).

6 consecutive transmembrane segments (helical) span residues 7–27 (FIILTYIIMQFSALIAIPLLF), 44–64 (AQGLWSVISFIACLVVVLLIL), 80–100 (IGLSILWAIAGFFIALFSQGI), 127–147 (AVPLMIIVSSIVGPILEEIIF), 159–179 (TNFFFAGLISSVIFGIVHADL), and 202–222 (IWVPIFAHLMMNTFVVIMQLE). Catalysis depends on proton donor/acceptor residues E143 and H176.

Belongs to the peptidase U48 family.

Its subcellular location is the cell membrane. May function as endopeptidase which proteolytically removes the C-terminal three residues of farnesylated peptides containing the CAAX motif where C is cysteine, A is an aliphatic amino acid and X is any amino acid. In Bacillus subtilis (strain 168), this protein is Putative membrane peptidase YdiL (ydiL).